Consider the following 121-residue polypeptide: Small ribosomal subunit protein uS13 (121 aa).

A disordered region spans residues 91-121 (HRMSLPVRGQRTRTNARTRRGSRKTVAGRKK). Basic residues predominate over residues 100–121 (QRTRTNARTRRGSRKTVAGRKK).

It belongs to the universal ribosomal protein uS13 family. In terms of assembly, part of the 30S ribosomal subunit. Forms a loose heterodimer with protein S19. Forms two bridges to the 50S subunit in the 70S ribosome.

In terms of biological role, located at the top of the head of the 30S subunit, it contacts several helices of the 16S rRNA. In the 70S ribosome it contacts the 23S rRNA (bridge B1a) and protein L5 of the 50S subunit (bridge B1b), connecting the 2 subunits; these bridges are implicated in subunit movement. Contacts the tRNAs in the A and P-sites. The polypeptide is Small ribosomal subunit protein uS13 (Prochlorococcus marinus (strain MIT 9211)).